A 109-amino-acid chain; its full sequence is Nucleoid-associated protein plu3840 (109 aa).

Disordered regions lie at residues 1 to 23 (MFGKGGLGNLMKQAQQMQDKMQK) and 89 to 109 (KEKMAGISSGMQLPPGFKMPF).

It belongs to the YbaB/EbfC family. As to quaternary structure, homodimer.

It is found in the cytoplasm. Its subcellular location is the nucleoid. Binds to DNA and alters its conformation. May be involved in regulation of gene expression, nucleoid organization and DNA protection. The polypeptide is Nucleoid-associated protein plu3840 (Photorhabdus laumondii subsp. laumondii (strain DSM 15139 / CIP 105565 / TT01) (Photorhabdus luminescens subsp. laumondii)).